The following is a 53-amino-acid chain: Sec-independent protein translocase protein TatA (53 aa).

Residues 1-21 (MGMSVSHLLIVLLIIFVLFGA) traverse the membrane as a helical segment.

It belongs to the TatA/E family. The Tat system comprises two distinct complexes: a TatABC complex, containing multiple copies of TatA, TatB and TatC subunits, and a separate TatA complex, containing only TatA subunits. Substrates initially bind to the TatABC complex, which probably triggers association of the separate TatA complex to form the active translocon.

The protein localises to the cell inner membrane. In terms of biological role, part of the twin-arginine translocation (Tat) system that transports large folded proteins containing a characteristic twin-arginine motif in their signal peptide across membranes. TatA could form the protein-conducting channel of the Tat system. In Rickettsia massiliae (strain Mtu5), this protein is Sec-independent protein translocase protein TatA.